The sequence spans 122 residues: Large ribosomal subunit protein uL14 (122 aa).

The protein belongs to the universal ribosomal protein uL14 family. As to quaternary structure, part of the 50S ribosomal subunit. Forms a cluster with proteins L3 and L19. In the 70S ribosome, L14 and L19 interact and together make contacts with the 16S rRNA in bridges B5 and B8.

In terms of biological role, binds to 23S rRNA. Forms part of two intersubunit bridges in the 70S ribosome. The chain is Large ribosomal subunit protein uL14 from Clostridium tetani (strain Massachusetts / E88).